The sequence spans 231 residues: Orotate phosphoribosyltransferase (231 aa).

Lys-29 contacts 5-phospho-alpha-D-ribose 1-diphosphate. 37-38 (FF) provides a ligand contact to orotate. 5-phospho-alpha-D-ribose 1-diphosphate is bound by residues 75–76 (YK), Arg-107, Lys-108, Lys-111, His-113, and 133–141 (DDVISRCTA). 2 residues coordinate orotate: Ser-137 and Arg-165.

The protein belongs to the purine/pyrimidine phosphoribosyltransferase family. PyrE subfamily. As to quaternary structure, homodimer.

It catalyses the reaction orotidine 5'-phosphate + diphosphate = orotate + 5-phospho-alpha-D-ribose 1-diphosphate. Its pathway is pyrimidine metabolism; UMP biosynthesis via de novo pathway; UMP from orotate: step 1/2. Its function is as follows. Catalyzes the transfer of a ribosyl phosphate group from 5-phosphoribose 1-diphosphate to orotate, leading to the formation of orotidine monophosphate (OMP). The protein is Orotate phosphoribosyltransferase (URA5) of Podospora anserina (Pleurage anserina).